A 204-amino-acid chain; its full sequence is DNA polymerase epsilon subunit D (204 aa).

The segment covering lysine 165–alanine 177 has biased composition (basic and acidic residues). The tract at residues lysine 165 to histidine 204 is disordered. A compositionally biased stretch (acidic residues) spans glycine 181–glutamate 193. A compositionally biased stretch (basic and acidic residues) spans glycine 194 to histidine 204.

As to quaternary structure, heterotetramer. Consists of four subunits: POL2, DPB2, DPB3 and DPB4.

Its subcellular location is the nucleus. Its function is as follows. As accessory component of the DNA polymerase epsilon (DNA polymerase II) participates in chromosomal DNA replication. This is DNA polymerase epsilon subunit D (DPB4) from Eremothecium gossypii (strain ATCC 10895 / CBS 109.51 / FGSC 9923 / NRRL Y-1056) (Yeast).